A 100-amino-acid chain; its full sequence is Large ribosomal subunit protein eL31 (100 aa).

This sequence belongs to the eukaryotic ribosomal protein eL31 family.

The polypeptide is Large ribosomal subunit protein eL31 (Hyperthermus butylicus (strain DSM 5456 / JCM 9403 / PLM1-5)).